Here is a 966-residue protein sequence, read N- to C-terminus: Muscular LMNA-interacting protein (966 aa).

A Phosphoserine modification is found at Ser129. Disordered stretches follow at residues 132–154 (EDEA…IATR), 182–207 (SHPE…TSEQ), 303–337 (LAPE…SLRS), 354–388 (PSPK…LKSP), 434–562 (IKQT…TRPS), 597–684 (KRTC…TPSL), 785–837 (SMHS…SQLT), and 929–966 (SLRD…DSKE). Residues 144–810 (PPGATGNIAT…GSETIKTPTT (667 aa)) are required for interaction with ISL1. Polar residues-rich tracts occupy residues 195 to 207 (KHGQ…TSEQ) and 325 to 337 (TSPS…SLRS). 3 stretches are compositionally biased toward low complexity: residues 354–387 (PSPK…GLKS), 437–455 (TPST…TGST), and 478–497 (PLSQ…SYAA). Ser486 is modified (phosphoserine). Polar residues predominate over residues 507–521 (TLRSSTTPPQSQTDL). 2 stretches are compositionally biased toward basic and acidic residues: residues 542–555 (GRKD…EKNR) and 597–607 (KRTCSQRHSDQ). 2 stretches are compositionally biased toward polar residues: residues 639–649 (SSLTQALQRSP) and 657–684 (GSAT…TPSL). Residues 785–797 (SMHSSDSPSRPSQ) show a composition bias toward low complexity. Position 791 is a phosphoserine (Ser791). Polar residues predominate over residues 798–810 (TMLGSETIKTPTT). A compositionally biased stretch (low complexity) spans 825–834 (SSSSSTTSES). Residues 937–946 (SPTLLSQDTY) are compositionally biased toward polar residues. Basic and acidic residues predominate over residues 957–966 (PEHDTLDSKE).

Directly interacts with LMNA. Interacts with ISL1 (via N-terminal domain); the interaction represses ISL1 transactivator activity. Interactions of ISL1 with MLIP1 and GCN5/KAT2A may be mutually exclusive. As to expression, expressed in cardiomyoctes. Expression is highly reduced in hypertrophic cardiomyocytes.

The protein resides in the nucleus. Its subcellular location is the nucleus envelope. It is found in the PML body. The protein localises to the cytoplasm. It localises to the cytosol. The protein resides in the cell membrane. Its subcellular location is the sarcolemma. Functionally, required for myoblast differentiation into myotubes, possibly acting as a transcriptional regulator of the myogenic program. Required for cardiac adaptation to stress through integrated regulation of the AKT/mTOR pathways and FOXO1. Regulates cardiac homeostasis and plays a role in the protection against cardiac hypertrophy. Binds chromatin. May act as a transcriptional cofactor for ISL1, repressing its transcriptional activity. May also repress MYOCD transcriptional activity. In Rattus norvegicus (Rat), this protein is Muscular LMNA-interacting protein.